The chain runs to 91 residues: Small ribosomal subunit protein uS15 (91 aa).

The protein belongs to the universal ribosomal protein uS15 family. As to quaternary structure, part of the 30S ribosomal subunit. Forms a bridge to the 50S subunit in the 70S ribosome, contacting the 23S rRNA.

Functionally, one of the primary rRNA binding proteins, it binds directly to 16S rRNA where it helps nucleate assembly of the platform of the 30S subunit by binding and bridging several RNA helices of the 16S rRNA. In terms of biological role, forms an intersubunit bridge (bridge B4) with the 23S rRNA of the 50S subunit in the ribosome. The chain is Small ribosomal subunit protein uS15 from Synechococcus sp. (strain JA-3-3Ab) (Cyanobacteria bacterium Yellowstone A-Prime).